A 417-amino-acid polypeptide reads, in one-letter code: Nucleosome assembly protein (417 aa).

Positions 1–47 (MSDPIRTKPKSSMQIDNAPTPHNTPASVLNPSYLKNGNPVRAQAQEQ) are disordered. Over residues 10 to 35 (KSSMQIDNAPTPHNTPASVLNPSYLK) the composition is skewed to polar residues. Phosphothreonine is present on residues T20 and T24. S27 is modified (phosphoserine). A Glycyl lysine isopeptide (Lys-Gly) (interchain with G-Cter in ubiquitin) cross-link involves residue K50. The residue at position 53 (T53) is a Phosphothreonine. Residues S69, S76, S82, S98, S104, and S140 each carry the phosphoserine modification. The interaction with NBA1 stretch occupies residues 143 to 362 (EQPKPEQIAK…IPRAVDWFTG (220 aa)). S159 and S177 each carry phosphoserine; by CK2. A DNA-binding region (H-T-H motif) is located at residues 330 to 356 (LEEDLEERLALDYSIGEQLKDKLIPRA). Positions 364-417 (ALEFEFEEDEEEADEDEDEEEDDDHGLEDDDGESAEEQDDFAGRPEQAPECKQS) are disordered. Over residues 367-403 (FEFEEDEEEADEDEDEEEDDDHGLEDDDGESAEEQDD) the composition is skewed to acidic residues. Position 397 is a phosphoserine; by CK2 (S397). Positions 404–417 (FAGRPEQAPECKQS) are enriched in basic and acidic residues.

It belongs to the nucleosome assembly protein (NAP) family. Component of the GIN4 complex composed of at least BNI5, CDC3, CDC10, CDC11, CDC12, GIN4, NAP1 and SHS1 which forms a ring at the bud neck. Homodimer (in-vitro). Interacts with the B-type cyclin CLB2. Interacts with 60S ribosomal protein L18 (RPL18A or RPL18B), CKA2, CKI1, eukaryotic elongation factor 1 complex eEF1A (TEF1 or TEF2), FOL1, HSC82, HTA2, HTB2, HTZ1, KAP114, KCC4, NIS1, SSA1, SSA2, SSB1, SSC1, SHM1, SIP5 and TCO89. Interacts with NBA1. Interacts with histone H3/H4 heterodimers. In terms of processing, phosphorylation by CK2 is required for normal progression through S phase. CK2 phosphorylation is not required for correct bud formation nor histone binding.

It is found in the cytoplasm. The protein resides in the nucleus. The protein localises to the bud neck. Acidic protein, which assembles histones into an octamer (in vitro). Involved in the regulation of the localization and the function of the septins during mitosis. Involved in the function of B-type cyclins. The sequence is that of Nucleosome assembly protein from Saccharomyces cerevisiae (strain ATCC 204508 / S288c) (Baker's yeast).